Consider the following 240-residue polypeptide: Ribosomal RNA small subunit methyltransferase G (240 aa).

Residues Gly-77, Phe-82, 128–129 (AE), and Arg-148 each bind S-adenosyl-L-methionine. Residues 217 to 240 (EKRSKTPKKYPRKAGTPNKSPLLK) form a disordered region.

It belongs to the methyltransferase superfamily. RNA methyltransferase RsmG family.

It is found in the cytoplasm. Specifically methylates the N7 position of guanine in position 535 of 16S rRNA. The sequence is that of Ribosomal RNA small subunit methyltransferase G from Staphylococcus carnosus (strain TM300).